Reading from the N-terminus, the 280-residue chain is Bis(5'-nucleosyl)-tetraphosphatase, symmetrical (280 aa).

It belongs to the Ap4A hydrolase family.

The enzyme catalyses P(1),P(4)-bis(5'-adenosyl) tetraphosphate + H2O = 2 ADP + 2 H(+). Its function is as follows. Hydrolyzes diadenosine 5',5'''-P1,P4-tetraphosphate to yield ADP. The chain is Bis(5'-nucleosyl)-tetraphosphatase, symmetrical from Paracidovorax citrulli (strain AAC00-1) (Acidovorax citrulli).